Consider the following 255-residue polypeptide: Imidazole glycerol phosphate synthase subunit HisF (255 aa).

Residues Asp-12 and Asp-131 contribute to the active site.

Belongs to the HisA/HisF family. In terms of assembly, heterodimer of HisH and HisF.

Its subcellular location is the cytoplasm. It catalyses the reaction 5-[(5-phospho-1-deoxy-D-ribulos-1-ylimino)methylamino]-1-(5-phospho-beta-D-ribosyl)imidazole-4-carboxamide + L-glutamine = D-erythro-1-(imidazol-4-yl)glycerol 3-phosphate + 5-amino-1-(5-phospho-beta-D-ribosyl)imidazole-4-carboxamide + L-glutamate + H(+). It functions in the pathway amino-acid biosynthesis; L-histidine biosynthesis; L-histidine from 5-phospho-alpha-D-ribose 1-diphosphate: step 5/9. Its function is as follows. IGPS catalyzes the conversion of PRFAR and glutamine to IGP, AICAR and glutamate. The HisF subunit catalyzes the cyclization activity that produces IGP and AICAR from PRFAR using the ammonia provided by the HisH subunit. The chain is Imidazole glycerol phosphate synthase subunit HisF from Ignicoccus hospitalis (strain KIN4/I / DSM 18386 / JCM 14125).